We begin with the raw amino-acid sequence, 968 residues long: uncharacterized protein (968 aa).

Residues 12–32 (LIFIFSLFFLILFFLESSIGF) form a helical membrane-spanning segment.

This sequence to E.coli YtfN.

Its subcellular location is the membrane. This is an uncharacterized protein from Buchnera aphidicola subsp. Schizaphis graminum (strain Sg).